Consider the following 294-residue polypeptide: Lycopene elongase/hydratase (294 aa).

A run of 8 helical transmembrane segments spans residues Phe-31–Gly-51, Leu-53–Leu-73, Leu-115–Met-135, Gly-160–Ala-180, Ala-182–Ile-202, Thr-222–Trp-242, Val-243–Val-263, and Ala-274–Gly-294.

This sequence belongs to the UbiA prenyltransferase family.

It is found in the cell membrane. It carries out the reaction all-trans-lycopene + dimethylallyl diphosphate + H2O = dihydroisopentenyldehydrorhodopin + diphosphate. The catalysed reaction is isopentenyldehydrorhodopin + dimethylallyl diphosphate + H2O = dihydrobisanhydrobacterioruberin + diphosphate. It functions in the pathway carotenoid biosynthesis. Involved in the biosynthesis of the acyclic C50 carotenoid bacterioruberin (BR). Acts as a bifunctional elongase/hydratase that catalyzes the elongation of lycopene by attaching a C(5) isoprene unit at C-2, as well as the hydroxylation of the previous end of the molecule. The enzyme acts at both ends of the substrate, and catalyzes the conversion of lycopene to the C(45) intermediate dihydroisopentenyldehydrorhodopin (DH-IDR) and the conversion of isopentenyldehydrorhodopin (IDR) to the C(50) carotenoid dihydrobisanhydrobacterioruberin (DH-BABR). Can also catalyze the conversion of lycopene to tetrahydrobisanhydrobacterioruberin (TH-BABR). The chain is Lycopene elongase/hydratase from Haloarcula japonica (strain ATCC 49778 / DSM 6131 / JCM 7785 / NBRC 101032 / NCIMB 13157 / TR-1).